Reading from the N-terminus, the 147-residue chain is Large ribosomal subunit protein uL13 (147 aa).

It belongs to the universal ribosomal protein uL13 family. In terms of assembly, part of the 50S ribosomal subunit.

Functionally, this protein is one of the early assembly proteins of the 50S ribosomal subunit, although it is not seen to bind rRNA by itself. It is important during the early stages of 50S assembly. The chain is Large ribosomal subunit protein uL13 from Streptomyces griseus subsp. griseus (strain JCM 4626 / CBS 651.72 / NBRC 13350 / KCC S-0626 / ISP 5235).